A 331-amino-acid chain; its full sequence is Biotin synthase (331 aa).

Positions 52 to 277 (PDVEVEGIIS…RTMLRFAGGR (226 aa)) constitute a Radical SAM core domain. Residues cysteine 67, cysteine 71, and cysteine 74 each coordinate [4Fe-4S] cluster. Cysteine 110, cysteine 143, cysteine 202, and arginine 272 together coordinate [2Fe-2S] cluster.

Belongs to the radical SAM superfamily. Biotin synthase family. As to quaternary structure, homodimer. Requires [4Fe-4S] cluster as cofactor. [2Fe-2S] cluster is required as a cofactor.

The catalysed reaction is (4R,5S)-dethiobiotin + (sulfur carrier)-SH + 2 reduced [2Fe-2S]-[ferredoxin] + 2 S-adenosyl-L-methionine = (sulfur carrier)-H + biotin + 2 5'-deoxyadenosine + 2 L-methionine + 2 oxidized [2Fe-2S]-[ferredoxin]. The protein operates within cofactor biosynthesis; biotin biosynthesis; biotin from 7,8-diaminononanoate: step 2/2. Functionally, catalyzes the conversion of dethiobiotin (DTB) to biotin by the insertion of a sulfur atom into dethiobiotin via a radical-based mechanism. This is Biotin synthase from Mycolicibacterium gilvum (strain PYR-GCK) (Mycobacterium gilvum (strain PYR-GCK)).